A 238-amino-acid polypeptide reads, in one-letter code: 3,4-dihydroxy-2-butanone 4-phosphate synthase (238 aa).

Residues 26-27, Asp31, 166-170, and Glu190 contribute to the D-ribulose 5-phosphate site; these read RE and RVGQT. Position 27 (Glu27) interacts with Mg(2+).

Belongs to the DHBP synthase family. In terms of assembly, homodimer. It depends on Mg(2+) as a cofactor. Mn(2+) is required as a cofactor.

The enzyme catalyses D-ribulose 5-phosphate = (2S)-2-hydroxy-3-oxobutyl phosphate + formate + H(+). It participates in cofactor biosynthesis; riboflavin biosynthesis; 2-hydroxy-3-oxobutyl phosphate from D-ribulose 5-phosphate: step 1/1. Functionally, catalyzes the conversion of D-ribulose 5-phosphate to formate and 3,4-dihydroxy-2-butanone 4-phosphate. In Archaeoglobus fulgidus (strain ATCC 49558 / DSM 4304 / JCM 9628 / NBRC 100126 / VC-16), this protein is 3,4-dihydroxy-2-butanone 4-phosphate synthase.